We begin with the raw amino-acid sequence, 183 residues long: MIVGLIGVVEKISALEAHIEVQGVVYGVQVSMRTSALLETGQKVRLKILQVIKEDANLLYGFLEESEKILFERLLKINGVGGRIALAILSSFSPNEFENIIATKEVKRLQQVPGIGKKLADKIMVDLIGFFIQDENRPARNEVFLALESLGFKSAEINKVLKTLKPNLSIEAAIKEALQQLRS.

The segment at 1–63 (MIVGLIGVVE…EDANLLYGFL (63 aa)) is domain I. Residues 64–139 (EESEKILFER…FFIQDENRPA (76 aa)) form a domain II region. A region of interest (flexible linker) is located at residue A139. The domain III stretch occupies residues 139-183 (ARNEVFLALESLGFKSAEINKVLKTLKPNLSIEAAIKEALQQLRS).

Belongs to the RuvA family. Homotetramer. Forms an RuvA(8)-RuvB(12)-Holliday junction (HJ) complex. HJ DNA is sandwiched between 2 RuvA tetramers; dsDNA enters through RuvA and exits via RuvB. An RuvB hexamer assembles on each DNA strand where it exits the tetramer. Each RuvB hexamer is contacted by two RuvA subunits (via domain III) on 2 adjacent RuvB subunits; this complex drives branch migration. In the full resolvosome a probable DNA-RuvA(4)-RuvB(12)-RuvC(2) complex forms which resolves the HJ.

The protein resides in the cytoplasm. Its function is as follows. The RuvA-RuvB-RuvC complex processes Holliday junction (HJ) DNA during genetic recombination and DNA repair, while the RuvA-RuvB complex plays an important role in the rescue of blocked DNA replication forks via replication fork reversal (RFR). RuvA specifically binds to HJ cruciform DNA, conferring on it an open structure. The RuvB hexamer acts as an ATP-dependent pump, pulling dsDNA into and through the RuvAB complex. HJ branch migration allows RuvC to scan DNA until it finds its consensus sequence, where it cleaves and resolves the cruciform DNA. In Helicobacter pylori (strain HPAG1), this protein is Holliday junction branch migration complex subunit RuvA.